We begin with the raw amino-acid sequence, 170 residues long: Ribulose bisphosphate carboxylase small subunit, chloroplastic (170 aa).

2 consecutive transit peptides (chloroplast) follow at residues 1-46 and 1-47; these read MAPT…GRIR and MAPT…RIRC.

Belongs to the RuBisCO small chain family. Heterohexadecamer of 8 large and 8 small subunits.

The protein resides in the plastid. The protein localises to the chloroplast. Functionally, ruBisCO catalyzes two reactions: the carboxylation of D-ribulose 1,5-bisphosphate, the primary event in carbon dioxide fixation, as well as the oxidative fragmentation of the pentose substrate. Both reactions occur simultaneously and in competition at the same active site. Although the small subunit is not catalytic it is essential for maximal activity. This is Ribulose bisphosphate carboxylase small subunit, chloroplastic from Zea mays (Maize).